The primary structure comprises 252 residues: Membrane protein insertase YidC (252 aa).

The N-terminal stretch at 1-20 (MRKKFGIIVALIALTTLLSG) is a signal peptide. Cys-21 carries the N-palmitoyl cysteine lipid modification. Cys-21 is lipidated: S-diacylglycerol cysteine. Helical transmembrane passes span 59–79 (YGLA…PLNV), 129–149 (LAGC…YHAI), 160–180 (FLWF…GLFT), 206–226 (IMLY…PAAL), and 228–248 (LYWV…NKPM).

The protein belongs to the OXA1/ALB3/YidC family. Type 2 subfamily.

It is found in the cell membrane. Required for the insertion and/or proper folding and/or complex formation of integral membrane proteins into the membrane. Involved in integration of membrane proteins that insert both dependently and independently of the Sec translocase complex, as well as at least some lipoproteins. The polypeptide is Membrane protein insertase YidC (Oceanobacillus iheyensis (strain DSM 14371 / CIP 107618 / JCM 11309 / KCTC 3954 / HTE831)).